The following is a 204-amino-acid chain: Dihydroorotase (204 aa).

Residue H34 participates in Zn(2+) binding. L79 is a substrate binding site. A Zn(2+)-binding site is contributed by D107. D107 is an active-site residue. 2 residues coordinate substrate: H111 and A123.

This sequence belongs to the metallo-dependent hydrolases superfamily. DHOase family. Class II DHOase subfamily. Homodimer. Zn(2+) serves as cofactor.

It catalyses the reaction (S)-dihydroorotate + H2O = N-carbamoyl-L-aspartate + H(+). It participates in pyrimidine metabolism; UMP biosynthesis via de novo pathway; (S)-dihydroorotate from bicarbonate: step 3/3. Its function is as follows. Catalyzes the reversible cyclization of carbamoyl aspartate to dihydroorotate. The protein is Dihydroorotase of Serratia marcescens.